Consider the following 408-residue polypeptide: Diguanylate cyclase DgcN (408 aa).

Residues 1–24 (MMDNDNSLNKRPTFKRALRNISMT) are Cytoplasmic-facing. A helical transmembrane segment spans residues 25-45 (SIFITMMLIWLLLSVTSVLTL). The Periplasmic portion of the chain corresponds to 46–52 (KQYAQKN). Residues 53-73 (LALTAATMTYSLEAAVVFADG) traverse the membrane as a helical segment. Residues 74–112 (PAATETLAALGQQGQFSTAEVRDKQQNILASWHYTRKDP) lie on the Cytoplasmic side of the membrane. The chain crosses the membrane as a helical span at residues 113–133 (GDTFSNFISHWLFPAPIIQPI). The Periplasmic segment spans residues 134–154 (RHNGETIGEVRLTARDSSISH). Residues 155 to 175 (FIWFSLAVLTGCILLASGIAI) form a helical membrane-spanning segment. The Cytoplasmic portion of the chain corresponds to 176-408 (TLTRHLHNGL…KHQRAEKLVR (233 aa)). Residues 183–236 (NGLVEALKNITDVVHDVRSNRNFSRRVSEERIAEFHRFALDFNSLLDEMEEWQL) enclose the HAMP domain. The GGDEF domain occupies 278–408 (KTSALLFLDG…KHQRAEKLVR (131 aa)). D286 serves as a coordination point for Mg(2+). N294, H299, and D303 together coordinate substrate. D329 provides a ligand contact to Mg(2+). D329 serves as the catalytic Proton acceptor.

As to quaternary structure, homodimer. Interacts with the cell division proteins FtsZ and ZipA. Mg(2+) is required as a cofactor.

It localises to the cell inner membrane. It carries out the reaction 2 GTP = 3',3'-c-di-GMP + 2 diphosphate. It functions in the pathway purine metabolism; 3',5'-cyclic di-GMP biosynthesis. Inhibited by YfiR, which prevents relocation to the midcell. A reductive stress signal is required to inactivate YfiR and turn on the DGC activity of DgcN. Bifunctional protein that catalyzes the synthesis of cyclic-di-GMP (c-di-GMP) in response to reductive stress and then dynamically relocates to the division site to arrest cell division in response to envelope stress. In the presence of high intracellular c-di-GMP levels, and in response to envelope stress, interacts with cell division proteins and halts cell division, without disassembling the Z ring, but by blocking its further progress toward cytokinesis. Part of a network that regulates cell motility by altering levels of c-di-GMP. The chain is Diguanylate cyclase DgcN from Escherichia coli (strain K12).